Here is a 216-residue protein sequence, read N- to C-terminus: Glycerol-3-phosphate acyltransferase (216 aa).

5 helical membrane-spanning segments follow: residues 11–31, 62–82, 95–115, 132–152, and 171–191; these read LVLG…FGLV, LALA…LVAS, VLAG…PIWL, ATAW…AALF, and LVLA…LAWI.

Belongs to the PlsY family. Probably interacts with PlsX.

It is found in the cell inner membrane. The enzyme catalyses an acyl phosphate + sn-glycerol 3-phosphate = a 1-acyl-sn-glycero-3-phosphate + phosphate. The protein operates within lipid metabolism; phospholipid metabolism. Catalyzes the transfer of an acyl group from acyl-phosphate (acyl-PO(4)) to glycerol-3-phosphate (G3P) to form lysophosphatidic acid (LPA). This enzyme utilizes acyl-phosphate as fatty acyl donor, but not acyl-CoA or acyl-ACP. The protein is Glycerol-3-phosphate acyltransferase of Rhodospirillum rubrum (strain ATCC 11170 / ATH 1.1.1 / DSM 467 / LMG 4362 / NCIMB 8255 / S1).